A 255-amino-acid chain; its full sequence is Syntaxin-6 (255 aa).

The residue at position 2 (Ser2) is an N-acetylserine. Ser2 is modified (phosphoserine). Positions 2 to 168 are required for interaction with VPS51; it reads SMEDPFFVVK…QAQQQLIVEQ (167 aa). The Cytoplasmic portion of the chain corresponds to 2–234; the sequence is SMEDPFFVVK…VSHMTSDRRQ (233 aa). A coiled-coil region spans residues 41 to 74; it reads EEIDWTTNELRNNLRSIEWDLEDLDETISIVEAN. Residues Ser129 and Ser152 each carry the phosphoserine modification. Residues 163–225 enclose the t-SNARE coiled-coil homology domain; it reads QLIVEQQDEQ…DNVMKKLAKV (63 aa). A helical; Anchor for type IV membrane protein membrane pass occupies residues 235–255; the sequence is WCAIAILFAVLVVVLILFLVL.

This sequence belongs to the syntaxin family. As to quaternary structure, identified in a complex containing STX6, STX12 and VAMP4. This complex also includes VTI1A. Binds EEA1. Interacts with VPS45A and GOPC. Interacts with MARCHF2; the interaction promotes MARCHF2-mediated ubiquitination and degradation of CFTR. Interacts with MARCHF3. Interacts with BLTP3B (via C-terminal coiled-coil domain). Interacts with BAIAP3; this interaction is increased in the presence of calcium. Interacts with VPS13B.

It localises to the golgi apparatus membrane. It is found in the golgi apparatus. The protein localises to the trans-Golgi network membrane. Its subcellular location is the recycling endosome membrane. In terms of biological role, SNARE promoting movement of transport vesicles to target membranes. Targets endosomes to the trans-Golgi network, and may therefore function in retrograde trafficking. Together with SNARE STX12, promotes movement of vesicles from endosomes to the cell membrane, and may therefore function in the endocytic recycling pathway. This chain is Syntaxin-6 (Stx6), found in Mus musculus (Mouse).